We begin with the raw amino-acid sequence, 312 residues long: Protein-methionine-sulfoxide reductase catalytic subunit MsrP (312 aa).

The segment at residues 1–42 (MALFRYPRPLPSEITPRDMYLSRRSLIGGAAALGAVSATADA) is a signal peptide (tat-type signal). Residues asparagine 68, 71 to 72 (YE), cysteine 126, serine 161, asparagine 211, arginine 216, and 227 to 229 (GIK) contribute to the Mo-molybdopterin site.

It belongs to the MsrP family. As to quaternary structure, heterodimer of a catalytic subunit (MsrP) and a heme-binding subunit (MsrQ). Requires Mo-molybdopterin as cofactor. Predicted to be exported by the Tat system. The position of the signal peptide cleavage has not been experimentally proven.

The protein resides in the periplasm. The catalysed reaction is L-methionyl-[protein] + a quinone + H2O = L-methionyl-(S)-S-oxide-[protein] + a quinol. It catalyses the reaction L-methionyl-[protein] + a quinone + H2O = L-methionyl-(R)-S-oxide-[protein] + a quinol. Its function is as follows. Part of the MsrPQ system that repairs oxidized periplasmic proteins containing methionine sulfoxide residues (Met-O), using respiratory chain electrons. Thus protects these proteins from oxidative-stress damage caused by reactive species of oxygen and chlorine generated by the host defense mechanisms. MsrPQ is essential for the maintenance of envelope integrity under bleach stress, rescuing a wide series of structurally unrelated periplasmic proteins from methionine oxidation. The catalytic subunit MsrP is non-stereospecific, being able to reduce both (R-) and (S-) diastereoisomers of methionine sulfoxide. The protein is Protein-methionine-sulfoxide reductase catalytic subunit MsrP of Gluconobacter oxydans (strain 621H) (Gluconobacter suboxydans).